A 327-amino-acid chain; its full sequence is DNA primase large subunit PriL (327 aa).

Residues Cys218, Cys290, Cys299, and Cys307 each contribute to the [4Fe-4S] cluster site.

This sequence belongs to the eukaryotic-type primase large subunit family. As to quaternary structure, heterodimer of a small subunit (PriS) and a large subunit (PriL). [4Fe-4S] cluster is required as a cofactor.

Functionally, regulatory subunit of DNA primase, an RNA polymerase that catalyzes the synthesis of short RNA molecules used as primers for DNA polymerase during DNA replication. Stabilizes and modulates the activity of the small subunit, increasing the rate of DNA synthesis, and conferring RNA synthesis capability. The DNA polymerase activity may enable DNA primase to also catalyze primer extension after primer synthesis. May also play a role in DNA repair. The polypeptide is DNA primase large subunit PriL (Thermoplasma volcanium (strain ATCC 51530 / DSM 4299 / JCM 9571 / NBRC 15438 / GSS1)).